The primary structure comprises 212 residues: ATP phosphoribosyltransferase (212 aa).

The protein belongs to the ATP phosphoribosyltransferase family. Short subfamily. Heteromultimer composed of HisG and HisZ subunits.

It is found in the cytoplasm. It carries out the reaction 1-(5-phospho-beta-D-ribosyl)-ATP + diphosphate = 5-phospho-alpha-D-ribose 1-diphosphate + ATP. Its pathway is amino-acid biosynthesis; L-histidine biosynthesis; L-histidine from 5-phospho-alpha-D-ribose 1-diphosphate: step 1/9. Its function is as follows. Catalyzes the condensation of ATP and 5-phosphoribose 1-diphosphate to form N'-(5'-phosphoribosyl)-ATP (PR-ATP). Has a crucial role in the pathway because the rate of histidine biosynthesis seems to be controlled primarily by regulation of HisG enzymatic activity. This Prochlorococcus marinus (strain MIT 9301) protein is ATP phosphoribosyltransferase.